The following is an 84-amino-acid chain: Small ribosomal subunit protein uS17 (84 aa).

This sequence belongs to the universal ribosomal protein uS17 family. In terms of assembly, part of the 30S ribosomal subunit.

One of the primary rRNA binding proteins, it binds specifically to the 5'-end of 16S ribosomal RNA. This is Small ribosomal subunit protein uS17 from Hamiltonella defensa subsp. Acyrthosiphon pisum (strain 5AT).